The sequence spans 306 residues: MNTTPYLEIKEEVYQALKENRPIVALESTIISHGMPYPQNVEVAKNVEETIRERGAVPATIAIIDGKMKVGLSKEELEFMATSKNILKASRMDLPVILAKGFNAATTVAATMIIAELAGIKVFVTGGIGGVHRNAQETFDISADLQELAKTNVAVISAGPKAILDLQLTKEYLETFGVPVIGYQTDELPCFFSRESGINVPYRVETPKEIASIMKTKWDLGLQGGIFIANPIPKEYSLDFEEIDKTIENAIEEAKKRKIKGKELTPFLLSKINELTKGESLKANIELVYNNAQLGAEIAKEFNILS.

E27 functions as the Proton donor in the catalytic mechanism. Substrate is bound by residues K88 and V108. Mn(2+) is bound at residue D140. Substrate is bound at residue 142–144 (SAD). K161 functions as the Nucleophile in the catalytic mechanism.

Belongs to the pseudouridine-5'-phosphate glycosidase family. Homotrimer. Requires Mn(2+) as cofactor.

The catalysed reaction is D-ribose 5-phosphate + uracil = psi-UMP + H2O. Catalyzes the reversible cleavage of pseudouridine 5'-phosphate (PsiMP) to ribose 5-phosphate and uracil. Functions biologically in the cleavage direction, as part of a pseudouridine degradation pathway. The polypeptide is Pseudouridine-5'-phosphate glycosidase (Petrotoga mobilis (strain DSM 10674 / SJ95)).